A 277-amino-acid chain; its full sequence is Acetyl-coenzyme A carboxylase carboxyl transferase subunit beta (277 aa).

A CoA carboxyltransferase N-terminal domain is found at 22–277 (LWTKCPGCNR…TLKQLLYFLT (256 aa)). Zn(2+)-binding residues include C26, C29, C45, and C48. Residues 26–48 (CPGCNRFLYTKELELNQSVCHYC) form a C4-type zinc finger.

It belongs to the AccD/PCCB family. As to quaternary structure, acetyl-CoA carboxylase is a heterohexamer composed of biotin carboxyl carrier protein (AccB), biotin carboxylase (AccC) and two subunits each of ACCase subunit alpha (AccA) and ACCase subunit beta (AccD). The cofactor is Zn(2+).

It is found in the cytoplasm. It carries out the reaction N(6)-carboxybiotinyl-L-lysyl-[protein] + acetyl-CoA = N(6)-biotinyl-L-lysyl-[protein] + malonyl-CoA. Its pathway is lipid metabolism; malonyl-CoA biosynthesis; malonyl-CoA from acetyl-CoA: step 1/1. Its function is as follows. Component of the acetyl coenzyme A carboxylase (ACC) complex. Biotin carboxylase (BC) catalyzes the carboxylation of biotin on its carrier protein (BCCP) and then the CO(2) group is transferred by the transcarboxylase to acetyl-CoA to form malonyl-CoA. The polypeptide is Acetyl-coenzyme A carboxylase carboxyl transferase subunit beta (Methylacidiphilum infernorum (isolate V4) (Methylokorus infernorum (strain V4))).